Here is a 119-residue protein sequence, read N- to C-terminus: Large ribosomal subunit protein bL20 (119 aa).

Belongs to the bacterial ribosomal protein bL20 family.

In terms of biological role, binds directly to 23S ribosomal RNA and is necessary for the in vitro assembly process of the 50S ribosomal subunit. It is not involved in the protein synthesizing functions of that subunit. The chain is Large ribosomal subunit protein bL20 from Bacillus pumilus (strain SAFR-032).